The chain runs to 786 residues: Neprilysin-3 (786 aa).

The Cytoplasmic segment spans residues 1–52 (MTRYKQTEFTEDDSSSIGGIQLNEATGHTGMQIRYHTARATWNWRSRNKTEK). The helical; Signal-anchor for type II membrane protein transmembrane segment at 53-73 (WLLITTFVMAITIFTLLIVLF) threads the bilayer. At 74 to 786 (TDGGSSDATK…MNPTEKCEVW (713 aa)) the chain is on the extracellular side. The region spanning 102–786 (PCLNKHCIFA…MNPTEKCEVW (685 aa)) is the Peptidase M13 domain. 5 cysteine pairs are disulfide-bonded: Cys103–Cys108, Cys126–Cys771, Cys134–Cys731, Cys190–Cys450, and Cys659–Cys783. N-linked (GlcNAc...) asparagine glycosylation is found at Asn216, Asn226, Asn256, Asn279, Asn305, Asn325, Asn356, Asn388, Asn496, and Asn569. A Zn(2+)-binding site is contributed by His622. The active site involves Glu623. Zn(2+) contacts are provided by His626 and Glu682. Residue Asp686 is the Proton donor of the active site. An N-linked (GlcNAc...) asparagine glycan is attached at Asn715.

This sequence belongs to the peptidase M13 family. Zn(2+) serves as cofactor.

Its subcellular location is the cell membrane. It carries out the reaction Preferential cleavage of polypeptides between hydrophobic residues, particularly with Phe or Tyr at P1'.. Metalloendoprotease which is required in the dorsal paired medial neurons for the proper formation of long-term (LTM) and middle-term memories (MTM). Also required in the mushroom body neurons where it functions redundantly with neprilysins Nep2 and Nep4 in normal LTM formation. The polypeptide is Neprilysin-3 (Drosophila melanogaster (Fruit fly)).